The chain runs to 346 residues: Elongation factor Ts (346 aa).

An involved in Mg(2+) ion dislocation from EF-Tu region spans residues 80 to 83 (TDFV).

It belongs to the EF-Ts family.

It is found in the cytoplasm. Functionally, associates with the EF-Tu.GDP complex and induces the exchange of GDP to GTP. It remains bound to the aminoacyl-tRNA.EF-Tu.GTP complex up to the GTP hydrolysis stage on the ribosome. This is Elongation factor Ts from Streptococcus suis (strain 98HAH33).